The primary structure comprises 574 residues: Choline transporter-like protein ctl1 (574 aa).

Residues asparagine 40 and asparagine 101 are each glycosylated (N-linked (GlcNAc...) asparagine). 8 consecutive transmembrane segments (helical) span residues 144–164 (WGLT…LMVW), 189–209 (KDAI…VAIP), 211–231 (FLYF…VYLL), 246–266 (LMLL…YYVW), 291–311 (QITL…FIWV), 336–356 (WVLA…FHAL), 396–416 (YGLC…LHFL), and 434–456 (TSAS…VPYM). Asparagine 457 is a glycosylation site (N-linked (GlcNAc...) asparagine). Transmembrane regions (helical) follow at residues 485–505 (LLAA…NYSI) and 511–531 (FYGY…IGAI). N-linked (GlcNAc...) asparagine glycosylation occurs at asparagine 558.

This sequence belongs to the CTL (choline transporter-like) family. Interacts with atg9.

It localises to the endoplasmic reticulum membrane. The protein resides in the preautophagosomal structure membrane. Functionally, required for the normal organization of the preautophagosomal structure (PAS) and for the correct subcellular location of atg9. The polypeptide is Choline transporter-like protein ctl1 (ctl1) (Schizosaccharomyces pombe (strain 972 / ATCC 24843) (Fission yeast)).